Consider the following 245-residue polypeptide: Protein-L-isoaspartate O-methyltransferase 1 (245 aa).

The active site involves serine 76.

The protein belongs to the methyltransferase superfamily. L-isoaspartyl/D-aspartyl protein methyltransferase family.

It is found in the cytoplasm. It carries out the reaction [protein]-L-isoaspartate + S-adenosyl-L-methionine = [protein]-L-isoaspartate alpha-methyl ester + S-adenosyl-L-homocysteine. Its function is as follows. Catalyzes the methyl esterification of L-isoaspartyl residues in peptides and proteins that result from spontaneous decomposition of normal L-aspartyl and L-asparaginyl residues. It plays a role in the repair and/or degradation of damaged proteins. This Rhodopseudomonas palustris (strain HaA2) protein is Protein-L-isoaspartate O-methyltransferase 1.